A 99-amino-acid chain; its full sequence is Large ribosomal subunit protein uL23 (99 aa).

Belongs to the universal ribosomal protein uL23 family. Part of the 50S ribosomal subunit. Contacts protein L29, and trigger factor when it is bound to the ribosome.

Its function is as follows. One of the early assembly proteins it binds 23S rRNA. One of the proteins that surrounds the polypeptide exit tunnel on the outside of the ribosome. Forms the main docking site for trigger factor binding to the ribosome. This chain is Large ribosomal subunit protein uL23, found in Saccharopolyspora erythraea (strain ATCC 11635 / DSM 40517 / JCM 4748 / NBRC 13426 / NCIMB 8594 / NRRL 2338).